Consider the following 481-residue polypeptide: Histidine--tRNA ligase, cytoplasmic (481 aa).

The segment at 1–48 is disordered; the sequence is MSEPVVDNVTNKVEKMEVKEKTSAPPKEKKEKKSNKVQLKTPKGTQDY. The span at 12–31 shows a compositional bias: basic and acidic residues; it reads KVEKMEVKEKTSAPPKEKKE.

It belongs to the class-II aminoacyl-tRNA synthetase family.

The protein resides in the cytoplasm. The catalysed reaction is tRNA(His) + L-histidine + ATP = L-histidyl-tRNA(His) + AMP + diphosphate + H(+). The chain is Histidine--tRNA ligase, cytoplasmic (hisS) from Dictyostelium discoideum (Social amoeba).